Reading from the N-terminus, the 366-residue chain is HNYNARLCAERSVRMPFLDSQTGVAQSNCYIWMEKRHRGQASAPGQLYTYPSRRWRKKRRAHPPEDPRLSFPSLKPDPEQMLKKEGLIPPDGSSLEALLRSDPIEKRIIPDPRDDDSLTEFPTLSRSARKRILEPDDFLDDLDDEDYEEDTPKRRKGKSKGKGIGGARKKLDAAALDDRDKPYACDICGKRYKNRPGLSYHYAHSHLVDEEGAGAEDKEDSQPPTPIMHRSEEQKSKKGPDGLALPNNYCDFCLGDSNTNKKSNQPEELVSCSDCGRSGHPSCLQFTPVMMAAVKTYRWQCIECKCCNICGTSENDDQLLFCDDCDRGYHMYCLSPPVAEPPEGSWSCHLCLDLLKDKASIYQKQS.

2 disordered regions span residues Ala-41–Ser-94 and Asp-140–Ala-167. Positions Pro-76–Gly-86 are enriched in basic and acidic residues. The segment covering Asp-140–Glu-149 has biased composition (acidic residues). The segment at Tyr-183 to His-206 adopts a C2H2-type zinc-finger fold. Positions Glu-211 to Leu-243 are disordered. Residues His-229–Pro-240 are compositionally biased toward basic and acidic residues. 2 consecutive PHD-type zinc fingers follow at residues Asn-247–Cys-307 and Cys-304–Leu-354.

It belongs to the requiem/DPF family.

The protein localises to the cytoplasm. It localises to the nucleus. Its function is as follows. May be a transcription factor required for the apoptosis response following survival factor withdrawal from myeloid cells. Might also have a role in the development and maturation of lymphoid cells. The chain is Zinc finger protein ubi-d4 B (req-b) from Xenopus laevis (African clawed frog).